The primary structure comprises 295 residues: Sulfotransferase 1A2 (295 aa).

Position 48–53 (48–53 (KSGTTW)) interacts with 3'-phosphoadenylyl sulfate. Substrate is bound at residue 106–108 (KTH). Histidine 108 acts as the Proton acceptor in catalysis. Residues arginine 130, serine 138, tyrosine 193, 227–232 (TSFKEM), and 255–259 (FMRKG) contribute to the 3'-phosphoadenylyl sulfate site.

Belongs to the sulfotransferase 1 family. As to quaternary structure, homodimer.

Its subcellular location is the cytoplasm. It carries out the reaction a phenol + 3'-phosphoadenylyl sulfate = an aryl sulfate + adenosine 3',5'-bisphosphate + H(+). In terms of biological role, sulfotransferase that utilizes 3'-phospho-5'-adenylyl sulfate (PAPS) as sulfonate donor to catalyze the sulfate conjugation of catecholamines, phenolic drugs and neurotransmitters. Is also responsible for the sulfonation and activation of minoxidil. Mediates the metabolic activation of carcinogenic N-hydroxyarylamines to DNA binding products and could so participate as modulating factor of cancer risk. The polypeptide is Sulfotransferase 1A2 (SULT1A2) (Homo sapiens (Human)).